A 333-amino-acid chain; its full sequence is 4-hydroxy-3-methylbut-2-enyl diphosphate reductase (333 aa).

Residue C20 coordinates [4Fe-4S] cluster. Residues H49 and H85 each coordinate (2E)-4-hydroxy-3-methylbut-2-enyl diphosphate. Dimethylallyl diphosphate is bound by residues H49 and H85. 2 residues coordinate isopentenyl diphosphate: H49 and H85. C107 lines the [4Fe-4S] cluster pocket. H135 contributes to the (2E)-4-hydroxy-3-methylbut-2-enyl diphosphate binding site. Residue H135 coordinates dimethylallyl diphosphate. Isopentenyl diphosphate is bound at residue H135. E137 serves as the catalytic Proton donor. (2E)-4-hydroxy-3-methylbut-2-enyl diphosphate is bound at residue T176. Position 206 (C206) interacts with [4Fe-4S] cluster. (2E)-4-hydroxy-3-methylbut-2-enyl diphosphate-binding residues include S234, S235, N236, and S279. The dimethylallyl diphosphate site is built by S234, S235, N236, and S279. 4 residues coordinate isopentenyl diphosphate: S234, S235, N236, and S279.

This sequence belongs to the IspH family. [4Fe-4S] cluster serves as cofactor.

It catalyses the reaction isopentenyl diphosphate + 2 oxidized [2Fe-2S]-[ferredoxin] + H2O = (2E)-4-hydroxy-3-methylbut-2-enyl diphosphate + 2 reduced [2Fe-2S]-[ferredoxin] + 2 H(+). The enzyme catalyses dimethylallyl diphosphate + 2 oxidized [2Fe-2S]-[ferredoxin] + H2O = (2E)-4-hydroxy-3-methylbut-2-enyl diphosphate + 2 reduced [2Fe-2S]-[ferredoxin] + 2 H(+). The protein operates within isoprenoid biosynthesis; dimethylallyl diphosphate biosynthesis; dimethylallyl diphosphate from (2E)-4-hydroxy-3-methylbutenyl diphosphate: step 1/1. It functions in the pathway isoprenoid biosynthesis; isopentenyl diphosphate biosynthesis via DXP pathway; isopentenyl diphosphate from 1-deoxy-D-xylulose 5-phosphate: step 6/6. Catalyzes the conversion of 1-hydroxy-2-methyl-2-(E)-butenyl 4-diphosphate (HMBPP) into a mixture of isopentenyl diphosphate (IPP) and dimethylallyl diphosphate (DMAPP). Acts in the terminal step of the DOXP/MEP pathway for isoprenoid precursor biosynthesis. This is 4-hydroxy-3-methylbut-2-enyl diphosphate reductase from Rhizobium leguminosarum bv. trifolii (strain WSM2304).